The primary structure comprises 263 residues: Phosphoribosylaminoimidazole-succinocarboxamide synthase (263 aa).

The segment at 239-263 (MNENEPPKPAGPVLVSSKPDGETRH) is disordered.

Belongs to the SAICAR synthetase family.

It carries out the reaction 5-amino-1-(5-phospho-D-ribosyl)imidazole-4-carboxylate + L-aspartate + ATP = (2S)-2-[5-amino-1-(5-phospho-beta-D-ribosyl)imidazole-4-carboxamido]succinate + ADP + phosphate + 2 H(+). Its pathway is purine metabolism; IMP biosynthesis via de novo pathway; 5-amino-1-(5-phospho-D-ribosyl)imidazole-4-carboxamide from 5-amino-1-(5-phospho-D-ribosyl)imidazole-4-carboxylate: step 1/2. This Chelativorans sp. (strain BNC1) protein is Phosphoribosylaminoimidazole-succinocarboxamide synthase.